The following is a 228-amino-acid chain: Probable endo-1,4-beta-xylanase A (228 aa).

The N-terminal stretch at 1–18 (MVSFSYLLLACSAIGALA) is a signal peptide. An N-linked (GlcNAc...) asparagine glycan is attached at asparagine 29. A GH11 domain is found at 40–228 (AGTPSSTGWN…SSGSASITVY (189 aa)). Catalysis depends on glutamate 124, which acts as the Nucleophile. The active-site Proton donor is glutamate 215.

The protein belongs to the glycosyl hydrolase 11 (cellulase G) family.

The protein localises to the secreted. It catalyses the reaction Endohydrolysis of (1-&gt;4)-beta-D-xylosidic linkages in xylans.. It participates in glycan degradation; xylan degradation. Endo-1,4-beta-xylanase involved in the hydrolysis of xylan, a major structural heterogeneous polysaccharide found in plant biomass representing the second most abundant polysaccharide in the biosphere, after cellulose. In Aspergillus fumigatus (strain CBS 144.89 / FGSC A1163 / CEA10) (Neosartorya fumigata), this protein is Probable endo-1,4-beta-xylanase A (xlnA).